The following is an 89-amino-acid chain: Bombyxin B-1 (89 aa).

An N-terminal signal peptide occupies residues 1–19 (MKTSVMFMLVIVISLMCSG). Intrachain disulfides connect Cys29–Cys75, Cys41–Cys88, and Cys74–Cys79. The propeptide at 48 to 66 (GGAQYAPYFWTRQYLGSRG) is c peptide like.

Belongs to the insulin family. Heterodimer of a B chain and an A chain linked by two disulfide bonds.

The protein resides in the secreted. Its function is as follows. Brain peptide responsible for activation of prothoracic glands to produce ecdysone in insects. This is Bombyxin B-1 (BBXB1) from Bombyx mori (Silk moth).